A 304-amino-acid polypeptide reads, in one-letter code: Putative S-adenosyl-L-methionine-dependent methyltransferase MAP_4189c (304 aa).

S-adenosyl-L-methionine-binding positions include D130 and 159–160 (DL).

It belongs to the UPF0677 family.

Exhibits S-adenosyl-L-methionine-dependent methyltransferase activity. In Mycolicibacterium paratuberculosis (strain ATCC BAA-968 / K-10) (Mycobacterium paratuberculosis), this protein is Putative S-adenosyl-L-methionine-dependent methyltransferase MAP_4189c.